A 357-amino-acid chain; its full sequence is Glutamine synthetase root isozyme B (357 aa).

The GS beta-grasp domain maps to 19 to 99 (IIAEYIWVGG…VICDVYTPAG (81 aa)). Residues 106 to 357 (KRYNAAKIFS…AETTILWKKS (252 aa)) form the GS catalytic domain.

Belongs to the glutamine synthetase family. In terms of assembly, homooctamer.

The protein localises to the cytoplasm. The catalysed reaction is L-glutamate + NH4(+) + ATP = L-glutamine + ADP + phosphate + H(+). The sequence is that of Glutamine synthetase root isozyme B (GS3B) from Pisum sativum (Garden pea).